The chain runs to 224 residues: A-factor barrier protein 1 (224 aa).

The signal sequence occupies residues 1-25; the sequence is MIFAPSFSLIKNILLVSFLISHSFA. 3 N-linked (GlcNAc...) asparagine glycosylation sites follow: Asn-148, Asn-181, and Asn-191. Asn-203 carries the GPI-anchor amidated asparagine lipid modification. Residues 204–224 constitute a propeptide, removed in mature form; sequence GAHAKSLYFPMALFGIFAVAL.

This sequence belongs to the SRP1/TIP1 family. In terms of processing, the GPI-anchor is attached to the protein in the endoplasmic reticulum and serves to target the protein to the cell surface. There, the glucosamine-inositol phospholipid moiety is cleaved off and the GPI-modified mannoprotein is covalently attached via its lipidless GPI glycan remnant to the 1,6-beta-glucan of the outer cell wall layer.

It localises to the secreted. The protein resides in the cell wall. Its subcellular location is the membrane. In terms of biological role, MATalpha-specific protein that interferes with a-factor, the pheromone secreted by MATa cells. Contributes to mating efficiency. Acts to bind and sequester a-factor rather than to degrade it, and promotes the efficient mating of MATalpha cells by keeping the a-factor concentration at the plasma membrane within the narrow range needed for accurate pheromone gradient detection. The protein is A-factor barrier protein 1 of Saccharomyces cerevisiae (strain ATCC 204508 / S288c) (Baker's yeast).